The following is a 264-amino-acid chain: 3-methyl-2-oxobutanoate hydroxymethyltransferase (264 aa).

Residues aspartate 45 and aspartate 84 each coordinate Mg(2+). 3-methyl-2-oxobutanoate contacts are provided by residues 45-46 (DS), aspartate 84, and lysine 112. Glutamate 114 is a binding site for Mg(2+). Glutamate 181 (proton acceptor) is an active-site residue.

Belongs to the PanB family. Homodecamer; pentamer of dimers. It depends on Mg(2+) as a cofactor.

It localises to the cytoplasm. The enzyme catalyses 3-methyl-2-oxobutanoate + (6R)-5,10-methylene-5,6,7,8-tetrahydrofolate + H2O = 2-dehydropantoate + (6S)-5,6,7,8-tetrahydrofolate. It functions in the pathway cofactor biosynthesis; (R)-pantothenate biosynthesis; (R)-pantoate from 3-methyl-2-oxobutanoate: step 1/2. Its function is as follows. Catalyzes the reversible reaction in which hydroxymethyl group from 5,10-methylenetetrahydrofolate is transferred onto alpha-ketoisovalerate to form ketopantoate. The sequence is that of 3-methyl-2-oxobutanoate hydroxymethyltransferase from Escherichia coli O8 (strain IAI1).